A 140-amino-acid chain; its full sequence is Nucleoside diphosphate kinase (140 aa).

ATP is bound by residues K11, F59, R87, T93, R104, and N114. H117 functions as the Pros-phosphohistidine intermediate in the catalytic mechanism.

The protein belongs to the NDK family. Homotetramer. Requires Mg(2+) as cofactor.

Its subcellular location is the cytoplasm. The catalysed reaction is a 2'-deoxyribonucleoside 5'-diphosphate + ATP = a 2'-deoxyribonucleoside 5'-triphosphate + ADP. The enzyme catalyses a ribonucleoside 5'-diphosphate + ATP = a ribonucleoside 5'-triphosphate + ADP. Its function is as follows. Major role in the synthesis of nucleoside triphosphates other than ATP. The ATP gamma phosphate is transferred to the NDP beta phosphate via a ping-pong mechanism, using a phosphorylated active-site intermediate. In Bradyrhizobium diazoefficiens (strain JCM 10833 / BCRC 13528 / IAM 13628 / NBRC 14792 / USDA 110), this protein is Nucleoside diphosphate kinase.